The sequence spans 541 residues: Chlorophyllide a oxygenase, chloroplastic (541 aa).

Positions 114-151 form a coiled coil; it reads LAREFKSIGTLRKELAELQEELAKAHNQVHLSETRVSS. Over residues 178 to 192 the composition is skewed to polar residues; that stretch reads AECTSLAPSTSSASR. The tract at residues 178 to 208 is disordered; sequence AECTSLAPSTSSASRVVNKKPPRRSLNVSGP. The region spanning 220 to 320 is the Rieske domain; it reads WYPVAFSSDL…CFEQEGMVWI (101 aa). Residues cysteine 261, histidine 263, cysteine 280, and histidine 283 each contribute to the [2Fe-2S] cluster site. Positions 359, 363, 366, and 371 each coordinate Fe cation.

As to expression, expressed in leaves and germinating seedlings, but not in sheaths and roots.

The protein localises to the plastid. It is found in the chloroplast membrane. It localises to the chloroplast thylakoid membrane. The enzyme catalyses chlorophyllide a + 2 NADPH + 2 O2 + 2 H(+) = chlorophyllide b + 2 NADP(+) + 3 H2O. Functionally, catalyzes a two-step oxygenase reaction involved in the synthesis of chlorophyll b. Acts specifically on the non-esterified chlorophyllide a and not on chlorophyll a. This is Chlorophyllide a oxygenase, chloroplastic (CAO) from Oryza sativa subsp. japonica (Rice).